A 131-amino-acid chain; its full sequence is Insertion element IS1 protein InsB (131 aa).

It belongs to the transposase 27 family.

In terms of biological role, absolutely required for transposition of IS1. This is Insertion element IS1 protein InsB (insB1) from Shigella flexneri.